The primary structure comprises 92 residues: Small ribosomal subunit protein uS19 (92 aa).

Belongs to the universal ribosomal protein uS19 family.

Functionally, protein S19 forms a complex with S13 that binds strongly to the 16S ribosomal RNA. In Exiguobacterium sibiricum (strain DSM 17290 / CCUG 55495 / CIP 109462 / JCM 13490 / 255-15), this protein is Small ribosomal subunit protein uS19.